Reading from the N-terminus, the 1210-residue chain is MNDDNSDRTEDGSRYVFIRDKNSNPSEYYQTSLSAQCPSVSHGDWNSDNPDAMVVDYEMDPAVDSSESVSLSHQCVEELAYPEPSSDFMGKHEFTMYSELTCQSPALVNTGKPQDLHSNCDSLEAIQDEKFDPLKPCECRSDDDYACGDSPEVLELKQTYGMKVDTANYTFIARHDIEQGQPLHAPGGLQTTVRDRNALSSCGRTPPHSSKMYVRGVNYNRENFENLQATPSKTLNTTFTVISDVLMQTDSPDVGVQGQNSLGNVTKEYTDGTRRGLIGEKEIQAVTLVSDGMEVPNGSASQEFYCVSEDDPNSETHSHGPYAQQEMGQNLRGTLPNCHVDGECPVLVPAFEKSKTRVLGSECKVTVTEDPHIDSHDNDSDIQSSTEELTLRSVSGQRGSPYEMGWGENGGAICTDKAGCMSTPVEQPPNLSFRLEPAEVKKYNNVENGPRDAKRAPNLKGEPTNMPKPNLGKSATKTNTTVGSKVRKTEIISYPTPNFKNIKAKVISRSVLQPKDTSIMKDTPSPQVTGGSSPSPGPSKHLTMMNKAPRSDFKASKKAEIPINKTHKQQFNKLITSQAAQVTTHSKNASLGVPRTTSATKSNQENVDKTGSPHAGSETGSVAAFFQKIKGILPVKMKSSECLEVTYVSHIDQISPEKGEQDGEAPMEKQELGKQATNEIFESKSLLVGSAPKTSTTPGRSSSKPDSRSLRKTPGLKAKVGPTAACLRRKSESRTLGSDRALSPQRIRRVSGSGGHAAINKYEEKPPKQAFQNGSGPLYLKPLVPRAHSHLLKTSPKGPSRKSLFTAFNSVEKGRQKNPRSLCIQTQTAPDVLSSERTLELAQYKTKCESQSGFILHLRQLLSRGNTKFEALTVVIQHLLSEREEALKQHKTLSQELVSLRGELVAASSACEKLEKARADLQTAYQEFVQKLNQQHQTDRTELENRLKDLYTAECEKLQSIYIEEAEKYKTQLQEQFDNLNAAHETTKLEIEASHSEKVELLKKTYETSLSEIKKSHEMEKKSLEDLLNEKQESLEKQINDLKSENDALNERLKSEEQKQLSREKANSKNPQVMYLEQELESLKAVLEIKNEKLHQQDMKLMKMEKLVDNNTALVDKLKRFQQENEELKARMDKHMAISRQLSTEQAALQESLEKESKVNKRLSMENEELLWKLHNGDLCSPKRSPTSSAIPFQSPRNSGSFSSPSISPR.

Disordered stretches follow at residues 1–21 (MNDD…IRDK), 370–404 (DPHI…PYEM), 446–482 (VENG…NTTV), 513–545 (QPKD…LTMM), and 585–618 (HSKN…AGSE). Positions 370-379 (DPHIDSHDND) are enriched in basic and acidic residues. 3 positions are modified to phosphoserine: Ser-375, Ser-380, and Ser-393. Polar residues predominate over residues 381-398 (DIQSSTEELTLRSVSGQR). Residues 446 to 455 (VENGPRDAKR) are compositionally biased toward basic and acidic residues. Positions 473-482 (KSATKTNTTV) are enriched in polar residues. Over residues 524–534 (PSPQVTGGSSP) the composition is skewed to low complexity. Residues 585 to 605 (HSKNASLGVPRTTSATKSNQE) show a composition bias toward polar residues. Position 621 is a phosphoserine (Ser-621). The disordered stretch occupies residues 683–771 (SKSLLVGSAP…YEEKPPKQAF (89 aa)). Polar residues predominate over residues 692–702 (PKTSTTPGRSS). Residues 876–1171 (IQHLLSEREE…RLSMENEELL (296 aa)) are a coiled coil. 9 positions are modified to phosphoserine: Ser-1143, Ser-1164, Ser-1185, Ser-1195, Ser-1199, Ser-1201, Ser-1203, Ser-1204, and Ser-1208. The tract at residues 1177 to 1210 (GDLCSPKRSPTSSAIPFQSPRNSGSFSSPSISPR) is disordered. Residues 1195–1210 (SPRNSGSFSSPSISPR) are compositionally biased toward low complexity.

It belongs to the MTUS1 family. As to quaternary structure, homodimer. Interacts with AGTR2. Interacts with PTPN6. As to expression, ubiquitously expressed, with highest levels in uterus and adrenal gland.

It is found in the mitochondrion. The protein resides in the golgi apparatus. Its subcellular location is the cell membrane. It localises to the nucleus. Functionally, cooperates with AGTR2 to inhibit ERK2 activation and cell proliferation. May be required for AGTR2 cell surface expression. Together with PTPN6, induces UBE2V2 expression upon angiotensin-II stimulation. The polypeptide is Microtubule-associated tumor suppressor 1 homolog (Mtus1) (Mus musculus (Mouse)).